Here is a 159-residue protein sequence, read N- to C-terminus: SsrA-binding protein (159 aa).

Belongs to the SmpB family.

The protein localises to the cytoplasm. Functionally, required for rescue of stalled ribosomes mediated by trans-translation. Binds to transfer-messenger RNA (tmRNA), required for stable association of tmRNA with ribosomes. tmRNA and SmpB together mimic tRNA shape, replacing the anticodon stem-loop with SmpB. tmRNA is encoded by the ssrA gene; the 2 termini fold to resemble tRNA(Ala) and it encodes a 'tag peptide', a short internal open reading frame. During trans-translation Ala-aminoacylated tmRNA acts like a tRNA, entering the A-site of stalled ribosomes, displacing the stalled mRNA. The ribosome then switches to translate the ORF on the tmRNA; the nascent peptide is terminated with the 'tag peptide' encoded by the tmRNA and targeted for degradation. The ribosome is freed to recommence translation, which seems to be the essential function of trans-translation. This chain is SsrA-binding protein, found in Coxiella burnetii (strain CbuK_Q154) (Coxiella burnetii (strain Q154)).